The primary structure comprises 272 residues: Magnetosome protein MamQ (272 aa).

At Met-1–Pro-46 the chain is on the cytoplasmic side. A helical membrane pass occupies residues Val-47 to Met-67. At Arg-68–Asn-272 the chain is on the lumenal side.

Belongs to the LemA family.

Its subcellular location is the magnetosome membrane. The protein resides in the cell inner membrane. In terms of biological role, essential for magnetosome formation. Not essential for formation of magnetosome membrane vesicles. One of 7 genes (mamLQBIEMO) able to induce magnetosome membrane biogenesis; coexpression of mamLQRBIEMO in a deletion of the 17 gene mamAB operon restores magnetosome vesicle formation but not magnetite biosynthesis. The protein is Magnetosome protein MamQ of Magnetospirillum gryphiswaldense (strain DSM 6361 / JCM 21280 / NBRC 15271 / MSR-1).